Consider the following 37-residue polypeptide: Cytochrome b6-f complex subunit 5 (37 aa).

A helical membrane pass occupies residues Leu5–Ala25.

The protein belongs to the PetG family. In terms of assembly, the 4 large subunits of the cytochrome b6-f complex are cytochrome b6, subunit IV (17 kDa polypeptide, PetD), cytochrome f and the Rieske protein, while the 4 small subunits are PetG, PetL, PetM and PetN. The complex functions as a dimer.

It is found in the plastid. The protein localises to the chloroplast thylakoid membrane. Its function is as follows. Component of the cytochrome b6-f complex, which mediates electron transfer between photosystem II (PSII) and photosystem I (PSI), cyclic electron flow around PSI, and state transitions. PetG is required for either the stability or assembly of the cytochrome b6-f complex. The sequence is that of Cytochrome b6-f complex subunit 5 from Pinus thunbergii (Japanese black pine).